Reading from the N-terminus, the 369-residue chain is MKSGRFIGVMSGTSLDGVDVVLATIDEHRVAQLASLSWPIPVSLKQAVLDICQGQQLTLSQFGQLDTQLGRLFADAVNALLKEQNLQARDIVAIGCHGQTVWHEPTGVAPHTLQIGDNNQIVARTGITVVGDFRRRDIALGGQGAPLVPAFHHALLAHSTERRMVLNIGGIANLSLLIPGQPVGGYDTGPGNMLMDAWIWRQAGKPYDKDAEWARAGKVILPLLQNMLSDPYFSQPAPKSTGREYFNYGWLERHLRHFPGVDPRDVQATLAELTAVTISEQVLLSGGCERLMVCGGGSRNPLLMARLAALLPGTEVTTTDAVGISGDDMEALAFAWLAWRTLAGLPGNLPSVTGASQETVLGAIFPANP.

12–19 is an ATP binding site; that stretch reads GTSLDGVD.

Belongs to the anhydro-N-acetylmuramic acid kinase family.

The enzyme catalyses 1,6-anhydro-N-acetyl-beta-muramate + ATP + H2O = N-acetyl-D-muramate 6-phosphate + ADP + H(+). The protein operates within amino-sugar metabolism; 1,6-anhydro-N-acetylmuramate degradation. Its pathway is cell wall biogenesis; peptidoglycan recycling. In terms of biological role, catalyzes the specific phosphorylation of 1,6-anhydro-N-acetylmuramic acid (anhMurNAc) with the simultaneous cleavage of the 1,6-anhydro ring, generating MurNAc-6-P. Is required for the utilization of anhMurNAc either imported from the medium or derived from its own cell wall murein, and thus plays a role in cell wall recycling. This Escherichia coli (strain SE11) protein is Anhydro-N-acetylmuramic acid kinase.